Consider the following 255-residue polypeptide: 5-oxoprolinase subunit A 1 (255 aa).

This sequence belongs to the LamB/PxpA family. In terms of assembly, forms a complex composed of PxpA, PxpB and PxpC.

The enzyme catalyses 5-oxo-L-proline + ATP + 2 H2O = L-glutamate + ADP + phosphate + H(+). Functionally, catalyzes the cleavage of 5-oxoproline to form L-glutamate coupled to the hydrolysis of ATP to ADP and inorganic phosphate. The polypeptide is 5-oxoprolinase subunit A 1 (Bradyrhizobium diazoefficiens (strain JCM 10833 / BCRC 13528 / IAM 13628 / NBRC 14792 / USDA 110)).